Here is a 181-residue protein sequence, read N- to C-terminus: Ribulose bisphosphate carboxylase small subunit 2B, chloroplastic (181 aa).

The N-terminal 54 residues, 1 to 54, are a transit peptide targeting the chloroplast; the sequence is MASSMFSSTAVVTSPAQATMVAPFTGLKSSASFPVTRKANNDITSITSNGGRVS.

This sequence belongs to the RuBisCO small chain family. In terms of assembly, heterohexadecamer of 8 large and 8 small subunits.

The protein localises to the plastid. It is found in the chloroplast. In terms of biological role, ruBisCO catalyzes two reactions: the carboxylation of D-ribulose 1,5-bisphosphate, the primary event in carbon dioxide fixation, as well as the oxidative fragmentation of the pentose substrate. Both reactions occur simultaneously and in competition at the same active site. Although the small subunit is not catalytic it is essential for maximal activity. This is Ribulose bisphosphate carboxylase small subunit 2B, chloroplastic (RBCS-2B) from Arabidopsis thaliana (Mouse-ear cress).